Reading from the N-terminus, the 141-residue chain is Small ribosomal subunit protein uS19 (141 aa).

Belongs to the universal ribosomal protein uS19 family.

Its function is as follows. Protein S19 forms a complex with S13 that binds strongly to the 16S ribosomal RNA. This chain is Small ribosomal subunit protein uS19, found in Thermofilum pendens (strain DSM 2475 / Hrk 5).